The sequence spans 290 residues: 4-hydroxy-tetrahydrodipicolinate synthase (290 aa).

Thr44 contacts pyruvate. Catalysis depends on Tyr132, which acts as the Proton donor/acceptor. The active-site Schiff-base intermediate with substrate is Lys160. Position 202 (Ile202) interacts with pyruvate.

This sequence belongs to the DapA family. In terms of assembly, homotetramer; dimer of dimers.

The protein resides in the cytoplasm. The catalysed reaction is L-aspartate 4-semialdehyde + pyruvate = (2S,4S)-4-hydroxy-2,3,4,5-tetrahydrodipicolinate + H2O + H(+). The protein operates within amino-acid biosynthesis; L-lysine biosynthesis via DAP pathway; (S)-tetrahydrodipicolinate from L-aspartate: step 3/4. Catalyzes the condensation of (S)-aspartate-beta-semialdehyde [(S)-ASA] and pyruvate to 4-hydroxy-tetrahydrodipicolinate (HTPA). In Geobacter sp. (strain M21), this protein is 4-hydroxy-tetrahydrodipicolinate synthase.